Reading from the N-terminus, the 235-residue chain is Protein GMH1 homolog (235 aa).

Over 1–54 (MSRSFRNGFRLLKLSQMDFERAWWDMANLFRAPRRVYRSITLRKQNINRYGRED) the chain is Cytoplasmic. The helical transmembrane segment at 55–75 (FSFIVLFSCMIVISALLWALF) threads the bilayer. The Lumenal segment spans residues 76–88 (YMNTPKGYVTTIT). The helical transmembrane segment at 89-109 (FMLFVDFGAVGVIMATMYYFI) threads the bilayer. Residues 110–140 (AKRFLMKSNDTILSSTDYQLEWNYCFDVHCN) lie on the Cytoplasmic side of the membrane. Residues 141 to 161 (SFFPSFVLLYVIQLFLLPVIT) form a helical membrane-spanning segment. The Lumenal portion of the chain corresponds to 162 to 175 (RDNFISLFMGNTLY). Residues 176-196 (LVALCYYSYLTFIGYQILPFL) traverse the membrane as a helical segment. At 197 to 201 (KNTHA) the chain is on the cytoplasmic side. The chain crosses the membrane as a helical span at residues 202-222 (LLLPIPMFFIMWALSLLGFNV). At 223-235 (PKHVVDVYFGKSA) the chain is on the lumenal side.

This sequence belongs to the unc-50 family.

It is found in the endoplasmic reticulum membrane. Has a role in meiosis. In Schizosaccharomyces pombe (strain 972 / ATCC 24843) (Fission yeast), this protein is Protein GMH1 homolog (mug16).